Consider the following 206-residue polypeptide: Heat shock protein beta-1 (206 aa).

An Omega-N-methylarginine modification is found at R12. A Phosphoserine modification is found at S13. S15 bears the Phosphoserine; by MAPKAPK2 and MAPKAPK3 mark. S27 is modified (phosphoserine). The interaction with TGFB1I1 stretch occupies residues R74–K206. Positions A80–T188 constitute a sHSP domain. A Phosphoserine; by MAPKAPK2, MAPKAPK3 and MAPKAPK5 modification is found at S86. A phosphoserine mark is found at S87, S90, and S102. The residue at position 127 (K127) is an N6-acetyllysine. T178 is modified (phosphothreonine). A phosphoserine mark is found at S180 and S200.

This sequence belongs to the small heat shock protein (HSP20) family. In terms of assembly, homooligomer. Homodimer; becomes monomeric upon activation. Heterooligomer; with HSPB6. Associates with alpha- and beta-tubulin. Interacts with TGFB1I1. Interacts with CRYAB. Interacts with HSPB8. Interacts with HSPBAP1. In terms of processing, phosphorylated upon exposure to protein kinase C activators and heat shock. Phosphorylation by MAPKAPK2 and MAPKAPK3 in response to stress dissociates HSPB1 from large small heat-shock protein (sHsps) oligomers and impairs its chaperone activity and ability to protect against oxidative stress effectively. Phosphorylation by MAPKAPK5 in response to PKA stimulation induces F-actin rearrangement. Expressed in a variety of tissues. High levels in lung, adrenal, xiphoid, adipose tissue, heart and striated and smooth muscle, lower levels in the CNS. Adult levels are much higher in the slow-twitch soleus muscle than in the fast-twitch rectus femoris and extensor digitorum muscles.

It is found in the cytoplasm. Its subcellular location is the nucleus. It localises to the cytoskeleton. The protein localises to the spindle. Functionally, small heat shock protein which functions as a molecular chaperone probably maintaining denatured proteins in a folding-competent state. Plays a role in stress resistance and actin organization. Through its molecular chaperone activity may regulate numerous biological processes including the phosphorylation and the axonal transport of neurofilament proteins. This Rattus norvegicus (Rat) protein is Heat shock protein beta-1 (Hspb1).